Reading from the N-terminus, the 362-residue chain is Dihydroorotate dehydrogenase (quinone) (362 aa).

Residues 62–66 (AGYDK) and Thr86 each bind FMN. Lys66 provides a ligand contact to substrate. Position 111–115 (111–115 (NRLGF)) interacts with substrate. FMN is bound by residues Asn139 and Asn170. Asn170 provides a ligand contact to substrate. Ser173 acts as the Nucleophile in catalysis. Substrate is bound at residue Asn175. Residues Lys215 and Ser243 each contribute to the FMN site. 244–245 (NT) contributes to the substrate binding site. FMN contacts are provided by residues Gly266, Gly295, and 316–317 (YS).

It belongs to the dihydroorotate dehydrogenase family. Type 2 subfamily. In terms of assembly, monomer. Requires FMN as cofactor.

It localises to the cell membrane. It carries out the reaction (S)-dihydroorotate + a quinone = orotate + a quinol. It participates in pyrimidine metabolism; UMP biosynthesis via de novo pathway; orotate from (S)-dihydroorotate (quinone route): step 1/1. Its function is as follows. Catalyzes the conversion of dihydroorotate to orotate with quinone as electron acceptor. The protein is Dihydroorotate dehydrogenase (quinone) of Rhizobium meliloti (strain 1021) (Ensifer meliloti).